The chain runs to 319 residues: Olfactory receptor 13F1 (319 aa).

Over 1 to 25 the chain is Extracellular; sequence MFPANWTSVKVFFFLGFFHYPKVQV. A glycan (N-linked (GlcNAc...) asparagine) is linked at Asn5. The helical transmembrane segment at 26–46 threads the bilayer; it reads IIFAVCLLMYLITLLGNIFLI. Residues 47 to 54 are Cytoplasmic-facing; the sequence is SITILDSH. The helical transmembrane segment at 55–75 threads the bilayer; sequence LHTPMYLFLSNLSFLDIWYSS. Topologically, residues 76 to 99 are extracellular; that stretch reads SALSPMLANFVSGRNTISFSGCAT. The cysteines at positions 97 and 189 are disulfide-linked. The helical transmembrane segment at 100–120 threads the bilayer; it reads QMYLSLAMGSTECVLLPMMAY. The Cytoplasmic portion of the chain corresponds to 121–139; sequence DRYVAICNPLRYPVIMNRR. A helical transmembrane segment spans residues 140-160; sequence TCVQIAAGSWMTGCLTAMVEM. Topologically, residues 161–197 are extracellular; that stretch reads MSVLPLSLCGNSIINHFTCEILAILKLVCVDTSLVQL. The chain crosses the membrane as a helical span at residues 198–217; that stretch reads IMLVISVLLLPMPMLLICIS. Topologically, residues 218–237 are cytoplasmic; that stretch reads YAFILASILRISSVEGRSKA. Residues 238–258 form a helical membrane-spanning segment; that stretch reads FSTCTAHLMVVVLFYGTALSM. Topologically, residues 259–271 are extracellular; it reads HLKPSAVDSQEID. Residues 272–292 traverse the membrane as a helical segment; sequence KFMALVYAGQTPMLNPIIYSL. The Cytoplasmic portion of the chain corresponds to 293-319; that stretch reads RNKEVKVALKKLLIRNHFNTAFISILK.

This sequence belongs to the G-protein coupled receptor 1 family.

Its subcellular location is the cell membrane. Odorant receptor. The chain is Olfactory receptor 13F1 (OR13F1) from Homo sapiens (Human).